Consider the following 126-residue polypeptide: KVFEKCELSQMLKANGLDGFQGITLEEWICIAFHESGFDSRALNYYNGSSSHGLFQINRQYWCDGQDAKSTEPSVNACQISCDKLRDDDIEDDIKCVKKILKESQGITAWEAWQPFCIADLDQWKC.

One can recognise a C-type lysozyme domain in the interval 1 to 126 (KVFEKCELSQ…CIADLDQWKC (126 aa)). 4 disulfide bridges follow: Cys6/Cys126, Cys30/Cys117, Cys63/Cys82, and Cys78/Cys96. Asn47 is a glycosylation site (N-linked (GlcNAc...) asparagine). Lys84, Asp87, Asp89, Asp92, and Asp93 together coordinate Ca(2+).

It belongs to the glycosyl hydrolase 22 family. Lactose synthase (LS) is a heterodimer of a catalytic component, beta1,4-galactosyltransferase (beta4Gal-T1) and a regulatory component, alpha-lactalbumin (LA). Mammary gland specific. Secreted in milk.

It localises to the secreted. In terms of biological role, regulatory subunit of lactose synthase, changes the substrate specificity of galactosyltransferase in the mammary gland making glucose a good acceptor substrate for this enzyme. This enables LS to synthesize lactose, the major carbohydrate component of milk. In other tissues, galactosyltransferase transfers galactose onto the N-acetylglucosamine of the oligosaccharide chains in glycoproteins. The polypeptide is Alpha-lactalbumin (LALBA) (Tachyglossus aculeatus aculeatus (Southeast Australian short-beaked echidna)).